Here is a 122-residue protein sequence, read N- to C-terminus: Large ribosomal subunit protein uL14c (122 aa).

Belongs to the universal ribosomal protein uL14 family. As to quaternary structure, part of the 50S ribosomal subunit.

The protein resides in the plastid. Its subcellular location is the chloroplast. In terms of biological role, binds to 23S rRNA. In Cryptomeria japonica (Japanese cedar), this protein is Large ribosomal subunit protein uL14c.